The sequence spans 182 residues: Mitochondrial FAD-linked sulfhydryl oxidase erv1 (182 aa).

The 103-residue stretch at arginine 75–alanine 177 folds into the ERV/ALR sulfhydryl oxidase domain. Residues glutamate 81–tryptophan 87, histidine 91, and tyrosine 120 each bind FAD. Intrachain disulfides connect cysteine 122/cysteine 125 and cysteine 153/cysteine 170. Residues cysteine 153–lysine 165 and lysine 176–alanine 177 each bind FAD.

FAD is required as a cofactor.

It is found in the mitochondrion intermembrane space. It carries out the reaction 2 R'C(R)SH + O2 = R'C(R)S-S(R)CR' + H2O2. FAD-dependent sulfhydryl oxidase that catalyzes disulfide bond formation. Required for the import and folding of small cysteine-containing proteins in the mitochondrial intermembrane space (IMS). The chain is Mitochondrial FAD-linked sulfhydryl oxidase erv1 (erv1) from Schizosaccharomyces pombe (strain 972 / ATCC 24843) (Fission yeast).